The following is a 244-amino-acid chain: 1-(5-phosphoribosyl)-5-[(5-phosphoribosylamino)methylideneamino] imidazole-4-carboxamide isomerase (244 aa).

Residue aspartate 8 is the Proton acceptor of the active site. Aspartate 129 serves as the catalytic Proton donor.

It belongs to the HisA/HisF family.

The protein localises to the cytoplasm. The catalysed reaction is 1-(5-phospho-beta-D-ribosyl)-5-[(5-phospho-beta-D-ribosylamino)methylideneamino]imidazole-4-carboxamide = 5-[(5-phospho-1-deoxy-D-ribulos-1-ylimino)methylamino]-1-(5-phospho-beta-D-ribosyl)imidazole-4-carboxamide. It participates in amino-acid biosynthesis; L-histidine biosynthesis; L-histidine from 5-phospho-alpha-D-ribose 1-diphosphate: step 4/9. The protein is 1-(5-phosphoribosyl)-5-[(5-phosphoribosylamino)methylideneamino] imidazole-4-carboxamide isomerase of Maricaulis maris (strain MCS10) (Caulobacter maris).